Here is a 148-residue protein sequence, read N- to C-terminus: uncharacterized protein (148 aa).

The region spanning 3-64 (IDDLDRKILS…KLNYEKLGYE (62 aa)) is the HTH asnC-type domain. Positions 22–41 (YREIAKKLNVAVGTIYNRIK) form a DNA-binding region, H-T-H motif.

This is an uncharacterized protein from Pyrococcus furiosus (strain ATCC 43587 / DSM 3638 / JCM 8422 / Vc1).